The sequence spans 51 residues: Ribosome biogenesis protein Nop10 (51 aa).

The protein belongs to the NOP10 family.

Functionally, involved in ribosome biogenesis; more specifically in 18S rRNA pseudouridylation and in cleavage of pre-rRNA. The sequence is that of Ribosome biogenesis protein Nop10 from Methanococcus aeolicus (strain ATCC BAA-1280 / DSM 17508 / OCM 812 / Nankai-3).